We begin with the raw amino-acid sequence, 373 residues long: Anhydro-N-acetylmuramic acid kinase (373 aa).

12–19 (GTSLDGVD) is an ATP binding site.

Belongs to the anhydro-N-acetylmuramic acid kinase family.

The enzyme catalyses 1,6-anhydro-N-acetyl-beta-muramate + ATP + H2O = N-acetyl-D-muramate 6-phosphate + ADP + H(+). It functions in the pathway amino-sugar metabolism; 1,6-anhydro-N-acetylmuramate degradation. It participates in cell wall biogenesis; peptidoglycan recycling. In terms of biological role, catalyzes the specific phosphorylation of 1,6-anhydro-N-acetylmuramic acid (anhMurNAc) with the simultaneous cleavage of the 1,6-anhydro ring, generating MurNAc-6-P. Is required for the utilization of anhMurNAc either imported from the medium or derived from its own cell wall murein, and thus plays a role in cell wall recycling. This is Anhydro-N-acetylmuramic acid kinase from Salmonella paratyphi A (strain ATCC 9150 / SARB42).